Reading from the N-terminus, the 158-residue chain is 2-C-methyl-D-erythritol 2,4-cyclodiphosphate synthase (158 aa).

Residues Asp-9 and His-11 each coordinate a divalent metal cation. Residues 9–11 (DVH) and 35–36 (HS) contribute to the 4-CDP-2-C-methyl-D-erythritol 2-phosphate site. His-43 is an a divalent metal cation binding site. Residues 57–59 (DIG), 62–66 (FPDTD), 101–107 (AQRPKMA), 133–136 (TTTE), Phe-140, and Arg-143 each bind 4-CDP-2-C-methyl-D-erythritol 2-phosphate.

Belongs to the IspF family. As to quaternary structure, homotrimer. Requires a divalent metal cation as cofactor.

The catalysed reaction is 4-CDP-2-C-methyl-D-erythritol 2-phosphate = 2-C-methyl-D-erythritol 2,4-cyclic diphosphate + CMP. The protein operates within isoprenoid biosynthesis; isopentenyl diphosphate biosynthesis via DXP pathway; isopentenyl diphosphate from 1-deoxy-D-xylulose 5-phosphate: step 4/6. Functionally, involved in the biosynthesis of isopentenyl diphosphate (IPP) and dimethylallyl diphosphate (DMAPP), two major building blocks of isoprenoid compounds. Catalyzes the conversion of 4-diphosphocytidyl-2-C-methyl-D-erythritol 2-phosphate (CDP-ME2P) to 2-C-methyl-D-erythritol 2,4-cyclodiphosphate (ME-CPP) with a corresponding release of cytidine 5-monophosphate (CMP). This is 2-C-methyl-D-erythritol 2,4-cyclodiphosphate synthase from Lysinibacillus sphaericus (strain C3-41).